The primary structure comprises 384 residues: 1-deoxy-D-xylulose 5-phosphate reductoisomerase (384 aa).

Residues Thr10, Gly11, Ser12, Ile13, Gly36, Lys37, Asn38, and Asn121 each coordinate NADPH. 1-deoxy-D-xylulose 5-phosphate is bound at residue Lys122. Residue Glu123 participates in NADPH binding. Residue Asp147 coordinates Mn(2+). Residues Ser148, Glu149, Ser173, and His196 each contribute to the 1-deoxy-D-xylulose 5-phosphate site. Glu149 is a binding site for Mn(2+). An NADPH-binding site is contributed by Gly202. 1-deoxy-D-xylulose 5-phosphate-binding residues include Ser209, Asn214, Lys215, and Glu218. Glu218 is a binding site for Mn(2+).

This sequence belongs to the DXR family. The cofactor is Mg(2+). Mn(2+) serves as cofactor.

It carries out the reaction 2-C-methyl-D-erythritol 4-phosphate + NADP(+) = 1-deoxy-D-xylulose 5-phosphate + NADPH + H(+). Its pathway is isoprenoid biosynthesis; isopentenyl diphosphate biosynthesis via DXP pathway; isopentenyl diphosphate from 1-deoxy-D-xylulose 5-phosphate: step 1/6. Its function is as follows. Catalyzes the NADPH-dependent rearrangement and reduction of 1-deoxy-D-xylulose-5-phosphate (DXP) to 2-C-methyl-D-erythritol 4-phosphate (MEP). The protein is 1-deoxy-D-xylulose 5-phosphate reductoisomerase of Exiguobacterium sibiricum (strain DSM 17290 / CCUG 55495 / CIP 109462 / JCM 13490 / 255-15).